The sequence spans 144 residues: Large ribosomal subunit protein uL16 (144 aa).

It belongs to the universal ribosomal protein uL16 family. In terms of assembly, part of the 50S ribosomal subunit.

Functionally, binds 23S rRNA and is also seen to make contacts with the A and possibly P site tRNAs. The protein is Large ribosomal subunit protein uL16 of Bacillus cytotoxicus (strain DSM 22905 / CIP 110041 / 391-98 / NVH 391-98).